Reading from the N-terminus, the 265-residue chain is Bilin biosynthesis protein RpcE (265 aa).

It belongs to the CpcE/RpcE/PecE family.

In terms of biological role, an enzyme involved in the biosynthesis of bilin. Might be involved in the specific attachment of phycoerythrobilin (PEB) to the R-phycocyanin II beta chain. The protein is Bilin biosynthesis protein RpcE (rpcE) of Synechococcus sp. (strain WH8020).